Reading from the N-terminus, the 113-residue chain is Tubulin-folding cofactor A (113 aa).

Positions 83 to 113 (LEETDEKEGPEIEDAKKTVADVEKQFPTEDA) are disordered. Residues 89 to 113 (KEGPEIEDAKKTVADVEKQFPTEDA) are compositionally biased toward basic and acidic residues.

The protein belongs to the TBCA family. In terms of assembly, monomer. Supercomplex made of cofactors A to E. Cofactors A and D function by capturing and stabilizing tubulin in a quasi-native conformation. Cofactor E binds to the cofactor D-tubulin complex; interaction with cofactor C then causes the release of tubulin polypeptides that are committed to the native state. Interacts with TUBB9. In terms of tissue distribution, expressed in leaves, roots, flowers and stems.

Functionally, tubulin-folding protein involved in the control of the alpha-/beta-tubulin monomer balance. Functions as a reservoir of bound and non-toxic beta-tubulin. Required in the developing embryo. In Arabidopsis thaliana (Mouse-ear cress), this protein is Tubulin-folding cofactor A (TFCA).